Here is a 444-residue protein sequence, read N- to C-terminus: Glucoside xylosyltransferase 2 (444 aa).

The Cytoplasmic portion of the chain corresponds to 1 to 4 (MKLR). The chain crosses the membrane as a helical; Signal-anchor for type II membrane protein span at residues 5 to 25 (SKAAALLLLALAVLLLALLSL). The Lumenal segment spans residues 26-444 (RARRDPEPPG…IIHMGPNPMS (419 aa)). The disordered stretch occupies residues 31–101 (PEPPGFPARP…LARRPGETRS (71 aa)). The segment covering 68-83 (RSPRRQPPRLRPRAGR) has biased composition (basic residues). The segment covering 87 to 101 (ASREKLARRPGETRS) has biased composition (basic and acidic residues). N-linked (GlcNAc...) asparagine glycosylation is present at Asn275.

It belongs to the glycosyltransferase 8 family.

The protein localises to the membrane. The catalysed reaction is 3-O-(beta-D-glucosyl)-L-seryl-[EGF-like domain protein] + UDP-alpha-D-xylose = 3-O-[alpha-D-xylosyl-(1-&gt;3)-beta-D-glucosyl]-L-seryl-[EGF-like domain protein] + UDP + H(+). In terms of biological role, glycosyltransferase which elongates the O-linked glucose attached to EGF-like repeats in the extracellular domain of Notch proteins by catalyzing the addition of xylose. This Mus musculus (Mouse) protein is Glucoside xylosyltransferase 2 (Gxylt2).